Here is a 211-residue protein sequence, read N- to C-terminus: Ribosomal RNA small subunit methyltransferase G (211 aa).

S-adenosyl-L-methionine is bound by residues Gly-73, 126–127 (IE), and Arg-142.

This sequence belongs to the methyltransferase superfamily. RNA methyltransferase RsmG family.

It localises to the cytoplasm. It carries out the reaction guanosine(527) in 16S rRNA + S-adenosyl-L-methionine = N(7)-methylguanosine(527) in 16S rRNA + S-adenosyl-L-homocysteine. Functionally, specifically methylates the N7 position of guanine in position 527 of 16S rRNA. In Methylorubrum extorquens (strain PA1) (Methylobacterium extorquens), this protein is Ribosomal RNA small subunit methyltransferase G.